Here is a 93-residue protein sequence, read N- to C-terminus: Large ribosomal subunit protein bL27 (93 aa).

It belongs to the bacterial ribosomal protein bL27 family.

In Trichormus variabilis (strain ATCC 29413 / PCC 7937) (Anabaena variabilis), this protein is Large ribosomal subunit protein bL27.